Consider the following 389-residue polypeptide: Tyrosine aminotransferase (389 aa).

Lys-242 carries the post-translational modification N6-(pyridoxal phosphate)lysine.

The protein belongs to the class-I pyridoxal-phosphate-dependent aminotransferase family. Homodimer. The cofactor is pyridoxal 5'-phosphate.

The catalysed reaction is L-tyrosine + 2-oxoglutarate = 3-(4-hydroxyphenyl)pyruvate + L-glutamate. Its pathway is amino-acid degradation; L-phenylalanine degradation; acetoacetate and fumarate from L-phenylalanine: step 2/6. Functionally, transaminase involved in tyrosine breakdown. Converts tyrosine to p-hydroxyphenylpyruvate. The sequence is that of Tyrosine aminotransferase (tatA) from Rhizobium meliloti (strain 1021) (Ensifer meliloti).